The sequence spans 206 residues: Ribosomal RNA small subunit methyltransferase G (206 aa).

S-adenosyl-L-methionine is bound by residues G73, L78, 124–125, and R139; that span reads VE.

Belongs to the methyltransferase superfamily. RNA methyltransferase RsmG family.

The protein resides in the cytoplasm. It carries out the reaction guanosine(527) in 16S rRNA + S-adenosyl-L-methionine = N(7)-methylguanosine(527) in 16S rRNA + S-adenosyl-L-homocysteine. Functionally, specifically methylates the N7 position of guanine in position 527 of 16S rRNA. In Idiomarina loihiensis (strain ATCC BAA-735 / DSM 15497 / L2-TR), this protein is Ribosomal RNA small subunit methyltransferase G.